Here is a 687-residue protein sequence, read N- to C-terminus: Probable WRKY transcription factor 2 (687 aa).

The tract at residues 197–276 (YGNYNNRSSS…AGGAPAEDGY (80 aa)) is disordered. 2 stretches are compositionally biased toward polar residues: residues 199–208 (NYNNRSSSHQ) and 219–249 (NIES…TSLE). The segment at residues 267-331 (AGGAPAEDGY…YKGAHNHLKP (65 aa)) is a DNA-binding region (WRKY 1). Zn(2+) contacts are provided by Cys-298, Cys-303, His-326, and His-328. Disordered stretches follow at residues 324-384 (GAHN…STRF) and 416-453 (FSND…ESKR). Residues 354–379 (RDSAATWVSCNNTQQQGGSNENNVEE) are compositionally biased toward polar residues. Residues 435 to 444 (YDGGGGGGGG) show a composition bias toward gly residues. The WRKY 2 DNA-binding region spans 481–546 (SDVDILDDGY…YEGKHNHDVP (66 aa)). Zn(2+)-binding residues include Cys-512, Cys-517, His-541, and His-543. Residues 537–599 (YEGKHNHDVP…QVTTNNQSPF (63 aa)) are disordered. Positions 553-565 (HGGGGDSGNGNSG) are enriched in gly residues. Residues 578-589 (HHSEPPRGRFDR) are compositionally biased toward basic and acidic residues. Residues 590 to 599 (QVTTNNQSPF) are compositionally biased toward polar residues.

The protein belongs to the WRKY group I family. Low expression in senescent leaves. Expressed in both the unfertilized egg cell and the pollen tube.

The protein localises to the nucleus. Transcription factor. Regulates WOX8 and WOX9 expression and basal cell division patterns during early embryogenesis. Interacts specifically with the W box (5'-(T)TGAC[CT]-3'), a frequently occurring elicitor-responsive cis-acting element. Required to repolarize the zygote from a transient symmetric state. The polypeptide is Probable WRKY transcription factor 2 (Arabidopsis thaliana (Mouse-ear cress)).